Here is a 293-residue protein sequence, read N- to C-terminus: Glycine betaine-binding protein OpuAC (293 aa).

Residues 1 to 20 (MLKKIIGIGVSAMLALSLAA) form the signal peptide. A lipid anchor (N-palmitoyl cysteine) is attached at C21. C21 carries the S-diacylglycerol cysteine lipid modification.

The complex is composed of two ATP-binding proteins (OpuAA), two transmembrane proteins (OpuAB) and a solute-binding protein (OpuAC). Interacts with FloT.

It localises to the cell membrane. The protein localises to the membrane raft. In terms of biological role, involved in a multicomponent binding-protein-dependent transport system for glycine betaine. This Bacillus subtilis (strain 168) protein is Glycine betaine-binding protein OpuAC (opuAC).